Here is a 380-residue protein sequence, read N- to C-terminus: MIPADDYPVTELTKALIARPSVTPLDEGCQTLMAERLSAIGFNIEPMVFEDTTNMWARRGNEGPVFCFAGHTDVVPTGDVSRWHTPPFVPTIIDGYLYGRGAADMKGSLAAMVIATERFVAKHPDHNGSIAFLITSDEEGPFINGTTRVIDTLEARNEKITWALVGEPSSTLKLGDVVKNGRRGSLTGNLIVKGIQGHVAYPHLADNPIHKAAPFLAELSQMHWDNGNEFFPPTSFQIANINGGTGASNVIPGALDVMFNFRYSTEVTAEILIERVEALLKAHELGYDISWIFNGLPFLTGDGPLLDATRIAIRQVTGYETDPQTTGGTSDGRFIAPTGAKVLELGPVNATIHKVNECVKVDDLEQLALCYEVILEQLLC.

Position 71 (H71) interacts with Zn(2+). Residue D73 is part of the active site. D104 is a binding site for Zn(2+). Residue E138 is the Proton acceptor of the active site. Residues E139, E167, and H353 each coordinate Zn(2+).

The protein belongs to the peptidase M20A family. DapE subfamily. As to quaternary structure, homodimer. Zn(2+) is required as a cofactor. Requires Co(2+) as cofactor.

The catalysed reaction is N-succinyl-(2S,6S)-2,6-diaminopimelate + H2O = (2S,6S)-2,6-diaminopimelate + succinate. Its pathway is amino-acid biosynthesis; L-lysine biosynthesis via DAP pathway; LL-2,6-diaminopimelate from (S)-tetrahydrodipicolinate (succinylase route): step 3/3. Functionally, catalyzes the hydrolysis of N-succinyl-L,L-diaminopimelic acid (SDAP), forming succinate and LL-2,6-diaminopimelate (DAP), an intermediate involved in the bacterial biosynthesis of lysine and meso-diaminopimelic acid, an essential component of bacterial cell walls. The protein is Succinyl-diaminopimelate desuccinylase of Shewanella baltica (strain OS185).